The sequence spans 305 residues: DNA-directed RNA polymerase 35 kDa subunit (305 aa).

This sequence belongs to the poxviridae DNA-directed RNA polymerase 35 kDa subunit family. As to quaternary structure, the DNA-dependent RNA polymerase used for intermediate and late genes expression consists of eight subunits 147 kDa, 133 kDa, 35 kDa, 30 kDa, 22 kDa, 19 kDa, 18 kDa and 7 kDa totalling more than 500 kDa in mass. The same holoenzyme, with the addition of the transcription-specificity factor RAP94, is used for early gene expression.

The protein resides in the virion. It carries out the reaction RNA(n) + a ribonucleoside 5'-triphosphate = RNA(n+1) + diphosphate. Its function is as follows. Part of the DNA-dependent RNA polymerase which catalyzes the transcription of viral DNA into RNA using the four ribonucleoside triphosphates as substrates. Responsible for the transcription of early, intermediate and late genes. DNA-dependent RNA polymerase associates with the early transcription factor (ETF), itself composed of D6 and A7, thereby allowing the early genes transcription. Late transcription, and probably also intermediate transcription, require newly synthesized RNA polymerase. The chain is DNA-directed RNA polymerase 35 kDa subunit (OPG156) from Cynomys gunnisoni (Gunnison's prairie dog).